Reading from the N-terminus, the 475-residue chain is Proton-coupled amino acid transporter 1 (475 aa).

Over residues 1 to 15 (MSTQRLRNEDYHDYS) the composition is skewed to basic and acidic residues. The tract at residues 1–32 (MSTQRLRNEDYHDYSSTDVSPEESPSEGLGSF) is disordered. At 1–50 (MSTQRLRNEDYHDYSSTDVSPEESPSEGLGSFSPGSYQRLGENSSMTWFQ) the chain is on the cytoplasmic side. The chain crosses the membrane as a helical span at residues 51-71 (TLIHLLKGNIGTGLLGLPLAV). At 72 to 77 (KNAGLL) the chain is on the extracellular side. The helical transmembrane segment at 78–98 (LGPLSLLVIGIVAVHCMGILV) threads the bilayer. Topologically, residues 99–140 (KCAHHLCRRLNKPFLDYGDTVMYGLECSPSTWIRNHSHWGRR) are cytoplasmic. A helical membrane pass occupies residues 141–161 (IVDFFLVVTQLGFCCVYFVFL). Residues 162–189 (ADNFKQVIEAANGTTTNCNNNETVILTP) lie on the Extracellular side of the membrane. 2 N-linked (GlcNAc...) asparagine glycosylation sites follow: Asn173 and Asn182. An intrachain disulfide couples Cys179 to Cys328. A helical membrane pass occupies residues 190-210 (TMDSRLYMLTFLPFLVLLSFI). The Cytoplasmic segment spans residues 211–214 (RNLR). The helical transmembrane segment at 215-235 (ILSIFSLLANISMFVSLIMIY) threads the bilayer. The Extracellular segment spans residues 236 to 256 (QFIVQRIPDPSHLPLVAPWKT). The helical transmembrane segment at 257–277 (YPLFFGTAIFAFEGIGVVLPL) threads the bilayer. Residues 278 to 288 (ENKMKDSQKFP) lie on the Cytoplasmic side of the membrane. The chain crosses the membrane as a helical span at residues 289–309 (LILYLGMAIITVLYISLGSLG). The Extracellular portion of the chain corresponds to 310–341 (YLQFGADIKGSITLNLPNCWLYQSVKLLYSIG). Residues 342 to 362 (IFFTYALQFYVAAEIIIPAIV) form a helical membrane-spanning segment. Residues 363 to 371 (SRVPERFEL) lie on the Cytoplasmic side of the membrane. The chain crosses the membrane as a helical span at residues 372–392 (VVDLSARTAMVCVTCVLAVLI). The Extracellular portion of the chain corresponds to 393–396 (PRLD). Residues 397–417 (LVISLVGSVSSSALALIIPPL) form a helical membrane-spanning segment. At 418 to 438 (LEVTTYYGEGISPLTITKDAL) the chain is on the cytoplasmic side. A helical membrane pass occupies residues 439–459 (ISILGFVGFVVGTYESLWELI). The Extracellular segment spans residues 460-475 (QPSHSDSSTNSTSAFI). N-linked (GlcNAc...) asparagine glycosylation is present at Asn469.

It belongs to the amino acid/polyamine transporter 2 family. In terms of tissue distribution, widely expressed and predominantly expressed in brain. Within the brain, expression restricted to neurons and not detected in glial cells. Abundant in regions rich in neurons using glutamate and GABA such as Purkinje cells in the cerebellum and pyramidal cells in the hippocampus.

The protein resides in the cell membrane. It localises to the apical cell membrane. It is found in the lysosome membrane. The enzyme catalyses glycine(in) + H(+)(in) = glycine(out) + H(+)(out). It carries out the reaction L-proline(out) + H(+)(out) = L-proline(in) + H(+)(in). The catalysed reaction is D-proline(out) + H(+)(out) = D-proline(in) + H(+)(in). It catalyses the reaction L-alanine(in) + H(+)(in) = L-alanine(out) + H(+)(out). The enzyme catalyses D-alanine(in) + H(+)(in) = D-alanine(out) + H(+)(out). It carries out the reaction L-serine(in) + H(+)(in) = L-serine(out) + H(+)(out). The catalysed reaction is D-serine(out) + H(+)(out) = D-serine(in) + H(+)(in). It catalyses the reaction 4-aminobutanoate(in) + H(+)(in) = 4-aminobutanoate(out) + H(+)(out). The enzyme catalyses beta-alanine(in) + H(+)(in) = beta-alanine(out) + H(+)(out). Electrogenic proton/amino acid symporter with selectivity for small apolar L-amino acids, their D-enantiomers and selected amino acid derivatives such as 4-aminobutanoate/GABA. May be involved in the efflux from the lysosomal compartment of neutral amino acids resulting from proteolysis. May play a role in specifying sites for exocytosis in neurons. The polypeptide is Proton-coupled amino acid transporter 1 (Rattus norvegicus (Rat)).